A 669-amino-acid polypeptide reads, in one-letter code: Acetyl-coenzyme A synthetase (669 aa).

CoA-binding positions include 211–214 and T329; that span reads RGGK. Residues 404 to 406, 428 to 433, D519, and R534 each bind ATP; these read GEP and DTYWQT. S542 is a binding site for CoA. Residue R545 participates in ATP binding. R602 contributes to the CoA binding site.

The protein belongs to the ATP-dependent AMP-binding enzyme family.

It carries out the reaction acetate + ATP + CoA = acetyl-CoA + AMP + diphosphate. It functions in the pathway ketone degradation; acetoin degradation. Its pathway is antibiotic biosynthesis; penicillin biosynthesis. This Penicillium chrysogenum (Penicillium notatum) protein is Acetyl-coenzyme A synthetase (facA).